A 619-amino-acid polypeptide reads, in one-letter code: Zinc finger protein 131 (619 aa).

The BTB domain occupies 34–98; it reads TDITLIVDGH…TYTAKLMIQG (65 aa). The Nuclear localization signal 1 signature appears at 137–148; it reads TGKNEAKKRKIA. Position 231 is a phosphoserine (Ser-231). 3 C2H2-type zinc fingers span residues 261-283, 288-311, and 328-350; these read FHCE…MKSH, FKCE…NCYH, and HICQ…LRKH. Glycyl lysine isopeptide (Lys-Gly) (interchain with G-Cter in SUMO2) cross-links involve residues Lys-289 and Lys-295. The Nuclear localization signal 2 motif lies at 317–328; it reads VSKKQRTGKKIH. The segment at 356-381 adopts a C2H2-type 4; degenerate zinc-finger fold; sequence FECSNCHERFARNSTLKCHLTACQTG. 2 C2H2-type zinc fingers span residues 392–414 and 420–443; these read YECQ…LVIH and NHCT…SDAH. Basic and acidic residues-rich tracts occupy residues 574–587 and 595–612; these read QEER…AAME and LETK…ENDR. Residues 574-619 are disordered; sequence QEEREPNHADAAMEEHEDAEGLETKPSEYSQARKTENDRTSLPVLE. Residue Lys-598 forms a Glycyl lysine isopeptide (Lys-Gly) (interchain with G-Cter in SUMO) linkage.

Belongs to the krueppel C2H2-type zinc-finger protein family. Monosumoylated at Lys-598 by CBX4 and UHRF2. Sumoylation may potentiate ZNF131 inhibition of estrogen signaling. Sumoylation does not interfere with ubiquitination. Post-translationally, ubiquitinated. Ubiquitously expressed. Predominant expression is found in the developing central nervous system with strongest signals in the forebrain, midbrain, and hindbrain areas and in the neural tube.

The protein localises to the nucleus. In terms of biological role, may be involved in transcriptional regulation as a repressor of ESR1/ER-alpha signaling. Plays a role during development and organogenesis as well as in the function of the adult central nervous system. This is Zinc finger protein 131 (Znf131) from Mus musculus (Mouse).